The chain runs to 327 residues: tRNA uridine(34) hydroxylase (327 aa).

Residues 130-224 enclose the Rhodanese domain; that stretch reads LDEDTVVLDT…YGKDPEVQGE (95 aa). Catalysis depends on Cys184, which acts as the Cysteine persulfide intermediate.

This sequence belongs to the TrhO family.

The catalysed reaction is uridine(34) in tRNA + AH2 + O2 = 5-hydroxyuridine(34) in tRNA + A + H2O. Its function is as follows. Catalyzes oxygen-dependent 5-hydroxyuridine (ho5U) modification at position 34 in tRNAs. The sequence is that of tRNA uridine(34) hydroxylase from Streptococcus thermophilus (strain ATCC BAA-250 / LMG 18311).